Reading from the N-terminus, the 34-residue chain is Peptide 9797 (34 aa).

As to expression, expressed by the venom gland.

It localises to the secreted. In Tityus stigmurus (Brazilian scorpion), this protein is Peptide 9797.